The sequence spans 327 residues: Asnovolin J 5',6'-dehydrogenase nvfM (327 aa).

Residues 9-29 (VAIVGASGVTGGSIVNGLLAL) form a helical membrane-spanning segment. NADP(+) is bound by residues 13-19 (GASGVTG) and Lys-47. The active-site Proton acceptor is the Lys-130.

The protein belongs to the NmrA-type oxidoreductase family.

The protein resides in the membrane. The enzyme catalyses asnovolin K + AH2 = asnovolin A + A. It carries out the reaction chermesin D methyl ester + AH2 = asnovolin J + A. It participates in secondary metabolite biosynthesis; terpenoid biosynthesis. Functionally, asnovolin J 5',6'-dehydrogenase; part of the gene cluster that mediates the biosynthesis of novofumigatonin, a heavily oxygenated meroterpenoid containing a unique orthoester moiety. The first step of the pathway is the synthesis of 3,5-dimethylorsellinic acid (DMOA) by the polyketide synthase nvfA via condensation of one acetyl-CoA starter unit with 3 malonyl-CoA units and 2 methylations. DMOA is then converted to farnesyl-DMOA by the farnesyltransferase nvfB. Epoxydation by FAD-dependent monooxygenase nvfK, followed by a protonation-initiated cyclization catalyzed by the terpene cyclase nvfL leads to the production of asnavolin H. The short chain dehydrogenase nvfC then as a 3-OH dehydrogenase of asnovolin H to yield chemesin D. There are two branches to synthesize asnovolin A from chemesin D. In one branch, chemesin D undergoes Baeyer-Villiger oxidation by nvfH, methylation by nvfJ, and enoyl reduction by the nvfM D enoylreductase that reduces the double bond between C-5'and C-6', to form respectively asnovolin I, asnovolin K, and asnovolin A. In the other branch, the methylation precedes the Baeyer-Villiger oxidation and the enoyl reduction to yield asnovolin A via the asnovolin J intermediate. Asnovolin A is further converted to fumigatonoid A by the Fe(II)/2-oxoglutarate-dependent dioxygenase nvfI that catalyzes an endoperoxidation reaction. The alpha/beta hydrolase nvfD then acts as an epimerase that converts fumigatonoid A to its C-5' epimer, which then undergoes spontaneous or nvfD-catalyzed lactonization. The following step utilizes the ketoreductase nvfG to produce fumigatonoid B. The dioxygenase nvfE further converts fumigatonoid B into fumigatonoid C. Finally the Fe(II)/2-oxoglutarate-dependent dioxygenase nvfF catalyzes two rounds of oxidation to transform fumigatonoid C into the end product, novofumigatonin A. In Aspergillus novofumigatus (strain IBT 16806), this protein is Asnovolin J 5',6'-dehydrogenase nvfM.